The sequence spans 669 residues: DNA ligase (669 aa).

Residues 34–38, 83–84, and E114 contribute to the NAD(+) site; these read DAEYD and SL. The active-site N6-AMP-lysine intermediate is the K116. NAD(+)-binding residues include R137, E171, K287, and K311. Zn(2+) contacts are provided by C405, C408, C423, and C428. Residues 591-669 form the BRCT domain; it reads NVESYFAGKT…EERFLQELNK (79 aa).

It belongs to the NAD-dependent DNA ligase family. LigA subfamily. It depends on Mg(2+) as a cofactor. The cofactor is Mn(2+).

It catalyses the reaction NAD(+) + (deoxyribonucleotide)n-3'-hydroxyl + 5'-phospho-(deoxyribonucleotide)m = (deoxyribonucleotide)n+m + AMP + beta-nicotinamide D-nucleotide.. Its function is as follows. DNA ligase that catalyzes the formation of phosphodiester linkages between 5'-phosphoryl and 3'-hydroxyl groups in double-stranded DNA using NAD as a coenzyme and as the energy source for the reaction. It is essential for DNA replication and repair of damaged DNA. The protein is DNA ligase of Bacillus cereus (strain ZK / E33L).